The sequence spans 260 residues: Carbonic anhydrase (260 aa).

Positions 1 to 31 (MAHAWGYGPADGPESWAESFPIANGPRQSPI) are disordered. Residues 3–259 (HAWGYGPADG…LKGRKVRASF (257 aa)) enclose the Alpha-carbonic anhydrase domain. The Proton acceptor role is filled by H64. Zn(2+) contacts are provided by H94, H96, and H119. Y127 is an active-site residue. 198–199 (TT) lines the substrate pocket.

The protein belongs to the alpha-carbonic anhydrase family. Zn(2+) is required as a cofactor.

The catalysed reaction is hydrogencarbonate + H(+) = CO2 + H2O. In terms of biological role, reversible hydration of carbon dioxide. In Danio rerio (Zebrafish), this protein is Carbonic anhydrase (cahz).